The sequence spans 227 residues: uncharacterized protein (227 aa).

A signal peptide spans 1–23; sequence MKKLTVTFLTFISIFFAATAAFA.

This is an uncharacterized protein from Coxiella burnetii (strain RSA 493 / Nine Mile phase I).